The chain runs to 71 residues: uncharacterized protein (71 aa).

Residues Met-1–Leu-23 form the signal peptide. 4 N-linked (GlcNAc...) asparagine glycosylation sites follow: Asn-20, Asn-28, Asn-44, and Asn-50.

The protein localises to the secreted. This is an uncharacterized protein from Dictyostelium discoideum (Social amoeba).